Consider the following 344-residue polypeptide: MVSSKELPPSTVPFFPNQFFRNQFRSKPQYPPPNTNLSEKVAIISGGNTGLGFEAATQLLSFKLGTLILAVRSTAKGEAAASKLRARYPKATIHVWKLDMSSYDSIQEFAGRVNTQLPRLDMVILNAGVSKLEFGTVSSTGHEETVQINYLSTALLAILLLPALKSKSPPGIPGRLTIVSAALTLVAKFPNRDESPLLPSFDNPKYWDPNDQYCSSKLLMHLFLWKLVDYISADDVIVNLADPGFVKGTELARDVSGGQRVGLSIFASLTGRNKKHGASTYVDAVVNKGKESHGGFIMSWQIHPYPTLLYTSEGQQITERLWDETLAEFEFANVRGIIESMKGN.

6 residues coordinate NADP(+): Leu-51, Lys-76, Asp-99, Asn-126, Tyr-213, and Lys-217. The Proton donor role is filled by Tyr-213. Residue Lys-217 is the Lowers pKa of active site Tyr of the active site.

This sequence belongs to the short-chain dehydrogenases/reductases (SDR) family.

Functionally, short chain dehydrogenase/reductase; part of the gene cluster that mediates the biosynthesis of the phthalide-terpenoid hybrid 11'-O-desmethylfendlerol. MfmJ seems not to be involved directly in the biosynthesis of 11'-O-desmethylfendlerol and its role has still to be determined. The biosynthesis of 11'-O-desmethylfendlerol begins with the NR-PKS mfmB that forms 3,5-dimethylorsellinic acid (DMOA), which is then transformed into the phthalide 5,7-dihydroxy-4-(hydroxymethyl)-6-methylphthalide by the cytochrome P450 monooxygenase mfmA and the hydrolase mfmC. Subsequently, the methyltransferase mfmE catalyzes 7-O-methylation to yield 5-hydroxy-4-(hydroxymethyl)-7-methoxy-6-methylphthalide, which undergoes C-3 hydroxylation by the cytochrome P450 monooxygenase mfmF. The resultant cyclopolic acid (2,5-dihydroxy-4-(hydroxymethyl)-7-methoxy-6-methylphthalide) is then farnesylated by the DMATS-type prenyltransferase mfmD to afford 5-O-farnesylcyclopolic acid. Finally, the Pyr4-family terpene cyclase mfmH cyclizes the farnesyl moiety of 5-O-farnesylcyclopolic acid into a drimane-like structure, thus completing the biosynthesis of 11'-O-desmethylfendlerol. In Annulohypoxylon moriforme (Filamentous fungus), this protein is Short chain dehydrogenase/reductase mfmJ.